A 618-amino-acid chain; its full sequence is DNA mismatch repair protein MutL (618 aa).

A compositionally biased stretch (low complexity) spans 366–381 (AEPTAAREPATPRYSG). Positions 366–405 (AEPTAAREPATPRYSGGTSGGNGGRQSAGGWPHAQPGYQK) are disordered. Positions 382–392 (GTSGGNGGRQS) are enriched in gly residues.

It belongs to the DNA mismatch repair MutL/HexB family.

In terms of biological role, this protein is involved in the repair of mismatches in DNA. It is required for dam-dependent methyl-directed DNA mismatch repair. May act as a 'molecular matchmaker', a protein that promotes the formation of a stable complex between two or more DNA-binding proteins in an ATP-dependent manner without itself being part of a final effector complex. In Salmonella agona (strain SL483), this protein is DNA mismatch repair protein MutL.